A 264-amino-acid chain; its full sequence is MLELRLVQGSLLKKVLEAVKDLVNDANFDCSTTGFSLQAMDSSHVALVSLLLRSEGFEHYRCDRNLSMGMNLGNMSKMLKCAGNDDIITIKADDGSDTVTFMFESPTQDKIADFEMKLMDIDSEHLGIPDAEYHSIVRMPSGEFSRICKDLSSIGDTVVISVTKEGVKFSTAGDIGTANIVLRQNTTVDKPEDAIVIEMNEPVSLSFALRYMNSFTKATPLSETVTISLSSELPVVVEYKVAEMGYIRYYLAPKIEEEEDTKPE.

Residues 61–80 mediate DNA binding; the sequence is RCDRNLSMGMNLGNMSKMLK.

It belongs to the PCNA family. As to quaternary structure, homo- and heterotrimer. Interacts with POLH, ATXR5 and ATXR6.

It localises to the nucleus. Functionally, this protein is an auxiliary protein of DNA polymerase delta and is involved in the control of eukaryotic DNA replication by increasing the polymerase's processibility during elongation of the leading strand. May be involved in UV resistance. This Arabidopsis thaliana (Mouse-ear cress) protein is Proliferating cell nuclear antigen 2 (PCNA2).